A 163-amino-acid polypeptide reads, in one-letter code: Cytosolic iron-sulfur assembly component 2B (163 aa).

It belongs to the MIP18 family. Component of the CIA complex. Component of the MMXD complex, which includes CIAO1, ERCC2, CIAO2B, MMS19 and SLC25A5. Interacts with CIAO1, ERCC2 and MMS19; the interactions are direct. Interacts with KIF4A; the interaction facilitates the transfer of Fe-S clusters to KIF4A to ensure proper localization of KIF4A to the mitotic machinery. Interacts with CCDC117; the interaction is direct.

It localises to the nucleus. The protein localises to the cytoplasm. It is found in the cytoskeleton. The protein resides in the spindle. Its function is as follows. Component of the cytosolic iron-sulfur protein assembly (CIA) complex, a multiprotein complex that mediates the incorporation of iron-sulfur cluster into extramitochondrial Fe/S proteins. As a CIA complex component and in collaboration with CIAO1 and MMS19, binds to and facilitates the assembly of most cytosolic-nuclear Fe/S proteins. As part of the mitotic spindle-associated MMXD complex it plays a role in chromosome segregation, probably by facilitating iron-sulfur cluster assembly into ERCC2/XPD. Together with MMS19, facilitates the transfer of Fe-S clusters to the motor protein KIF4A, which ensures proper localization of KIF4A to mitotic machinery components to promote the progression of mitosis. The protein is Cytosolic iron-sulfur assembly component 2B of Mus musculus (Mouse).